Consider the following 328-residue polypeptide: Methionyl-tRNA formyltransferase (328 aa).

121 to 124 lines the (6S)-5,6,7,8-tetrahydrofolate pocket; it reads SLLP.

It belongs to the Fmt family.

It carries out the reaction L-methionyl-tRNA(fMet) + (6R)-10-formyltetrahydrofolate = N-formyl-L-methionyl-tRNA(fMet) + (6S)-5,6,7,8-tetrahydrofolate + H(+). Attaches a formyl group to the free amino group of methionyl-tRNA(fMet). The formyl group appears to play a dual role in the initiator identity of N-formylmethionyl-tRNA by promoting its recognition by IF2 and preventing the misappropriation of this tRNA by the elongation apparatus. The sequence is that of Methionyl-tRNA formyltransferase from Paraburkholderia phytofirmans (strain DSM 17436 / LMG 22146 / PsJN) (Burkholderia phytofirmans).